A 411-amino-acid polypeptide reads, in one-letter code: Putative polysaccharide ligase RC0486 (411 aa).

Helical transmembrane passes span leucine 15–phenylalanine 35, glycine 78–isoleucine 98, leucine 101–alanine 121, leucine 133–phenylalanine 153, methionine 166–leucine 186, isoleucine 207–threonine 227, isoleucine 233–alanine 253, isoleucine 328–tyrosine 348, asparagine 361–tyrosine 381, and isoleucine 383–valine 403.

Belongs to the O-antigen ligase family.

The protein resides in the membrane. The sequence is that of Putative polysaccharide ligase RC0486 from Rickettsia conorii (strain ATCC VR-613 / Malish 7).